A 230-amino-acid polypeptide reads, in one-letter code: Ureidoacrylate amidohydrolase RutB (230 aa).

Aspartate 24 acts as the Proton acceptor in catalysis. Residue lysine 133 is part of the active site. The Nucleophile role is filled by cysteine 166.

It belongs to the isochorismatase family. RutB subfamily.

The enzyme catalyses (Z)-3-ureidoacrylate + H2O + H(+) = (Z)-3-aminoacrylate + NH4(+) + CO2. It carries out the reaction (Z)-3-ureidoacrylate + H2O = (Z)-3-aminoacrylate + carbamate + H(+). The catalysed reaction is (Z)-2-methylureidoacrylate + H2O + H(+) = (Z)-2-methylaminoacrylate + NH4(+) + CO2. Hydrolyzes ureidoacrylate to form aminoacrylate and carbamate. The carbamate hydrolyzes spontaneously, thereby releasing one of the nitrogen atoms of the pyrimidine ring as ammonia and one of its carbon atoms as CO2. The polypeptide is Ureidoacrylate amidohydrolase RutB (Escherichia coli (strain B / BL21-DE3)).